Here is a 662-residue protein sequence, read N- to C-terminus: Transforming growth factor beta activator LRRC32 (662 aa).

The signal sequence occupies residues 1–17 (MRPQILLLLALLTLGLA). Residues 18–625 (AQRQDKVPCK…EDCEKGGLKN (608 aa)) lie on the Extracellular side of the membrane. Residues 21-48 (QDKVPCKMVDKKVSCQGLGLLQVPSVLP) form the LRRNT domain. LRR repeat units lie at residues 50 to 73 (DTET…GFYT), 74 to 95 (ALRH…AFQA), 98 to 119 (HLEH…SAGG), 125 to 145 (RVTS…ERLL), 150 to 171 (SLHT…TFRD), 174 to 195 (VLEQ…AFEG), 198 to 219 (RLTH…SLQQ), 220 to 240 (LRVL…SQPQ), 244 to 265 (QLTW…AALP), and 266 to 286 (RLIY…PPQD). A glycan (N-linked (GlcNAc...) asparagine) is linked at Asn203. 2 N-linked (GlcNAc...) asparagine glycosylation sites follow: Asn271 and Asn308. 10 LRR repeats span residues 316–339 (QLLN…EHLT), 340–361 (SLCF…RSGS), 364–385 (CLML…ARAL), 387–408 (SLRT…TFAN), 411–432 (SLQR…DEPG), 444–465 (SLHS…AFLH), 467–488 (PLTE…ALGG), 492–513 (SLEV…LPCF), 515–536 (CLKR…TQAV), and 537–558 (SLEV…AMGG). A glycan (N-linked (GlcNAc...) asparagine) is linked at Asn345. Asn545 carries N-linked (GlcNAc...) asparagine glycosylation. One can recognise an LRRCT domain in the interval 571 to 620 (NPLSCCGNGWLAAQLHQGRVDVDATQDLICRFSSQEEVSLSHVRPEDCEK). A helical transmembrane segment spans residues 626-646 (INLIIILTFILVSAILLTTLA). Over 647–662 (TCCCVRRQKFNQQYKA) the chain is Cytoplasmic.

Belongs to the LRRC32/LRRC33 family. In terms of assembly, interacts with TGFB1; associates via disulfide bonds with the Latency-associated peptide chain (LAP) regulatory chain of TGFB1, leading to regulate activation of TGF-beta-1. Interacts with TGFB2. Interacts with TGFB3; associates via disulfide bonds with the Latency-associated peptide chain (LAP) regulatory chain of TGFB3, leading to regulate activation of TGF-beta-3. Interacts with LAPTM4B; decreases TGFB1 production in regulatory T-cells.

It localises to the cell membrane. Its subcellular location is the cell surface. Key regulator of transforming growth factor beta (TGFB1, TGFB2 and TGFB3) that controls TGF-beta activation by maintaining it in a latent state during storage in extracellular space. Associates specifically via disulfide bonds with the Latency-associated peptide (LAP), which is the regulatory chain of TGF-beta, and regulates integrin-dependent activation of TGF-beta. Able to outcompete LTBP1 for binding to LAP regulatory chain of TGF-beta. Controls activation of TGF-beta-1 (TGFB1) on the surface of activated regulatory T-cells (Tregs). Required for epithelial fusion during palate development by regulating activation of TGF-beta-3 (TGFB3). The chain is Transforming growth factor beta activator LRRC32 from Pongo abelii (Sumatran orangutan).